Consider the following 134-residue polypeptide: Larval cuticle protein A3A (134 aa).

Repeat unit 1 spans residues alanine 23 to valine 26. A disordered region spans residues aspartate 38–glycine 80. In terms of domain architecture, Chitin-binding type R&amp;R spans histidine 40–alanine 106. Repeat 2 spans residues alanine 111–alanine 114.

In terms of biological role, component of the cuticle of the larva of Tenebrio molitor. This is Larval cuticle protein A3A from Tenebrio molitor (Yellow mealworm beetle).